Here is a 165-residue protein sequence, read N- to C-terminus: Chaperone protein SicA (165 aa).

It belongs to the LcrH/SycD chaperone family. As to quaternary structure, dimer or higher-order oligomers.

The protein localises to the cytoplasm. Type III secretion-associated chaperone required for SipB and SipC stabilization. Prevents premature association of SipB with SipC, which may lead to their targeting for degradation. Along with InvF, required for transcription activation of sigDE (sopB pipC), sicAsipBCDA, and sopE. In Salmonella dublin, this protein is Chaperone protein SicA (sicA).